The chain runs to 119 residues: MSQRQQRVADLIHQQLAELLKKEVRDSRLSKISLTAVSISPDLKQAKVFYSLLENQNEKEVQKALNKATGYLRHLLAQATVLRYVPKLEFVYDESIERAHRISFLIERALKKDDSDESS.

Belongs to the RbfA family. In terms of assembly, monomer. Binds 30S ribosomal subunits, but not 50S ribosomal subunits or 70S ribosomes.

The protein resides in the cytoplasm. Functionally, one of several proteins that assist in the late maturation steps of the functional core of the 30S ribosomal subunit. Associates with free 30S ribosomal subunits (but not with 30S subunits that are part of 70S ribosomes or polysomes). Required for efficient processing of 16S rRNA. May interact with the 5'-terminal helix region of 16S rRNA. The polypeptide is Ribosome-binding factor A (Coxiella burnetii (strain CbuG_Q212) (Coxiella burnetii (strain Q212))).